A 487-amino-acid polypeptide reads, in one-letter code: GTPase Der (487 aa).

The EngA-type G 1 domain maps to 2 to 166; sequence LKIAILGRPN…RIKLVANLPE (165 aa). Residues 8-15, 55-59, and 118-121 contribute to the GTP site; these read GRPNVGKS, DTGGV, and NKAD. The interval 165 to 194 is disordered; the sequence is PEPREEEEEGLEELSVDEHEESEAALPSNT. A compositionally biased stretch (acidic residues) spans 168–187; the sequence is REEEEEGLEELSVDEHEESE. The 174-residue stretch at 225–398 folds into the EngA-type G 2 domain; the sequence is LKIALIGRPN…AIDELHHVVS (174 aa). Residues 231–238, 278–282, and 343–346 contribute to the GTP site; these read GRPNVGKS, DTAGL, and NKWD. The 85-residue stretch at 399–483 folds into the KH-like domain; it reads NKVPTPIVNK…PFDLEFKEKP (85 aa).

The protein belongs to the TRAFAC class TrmE-Era-EngA-EngB-Septin-like GTPase superfamily. EngA (Der) GTPase family. In terms of assembly, associates with the 50S ribosomal subunit.

In terms of biological role, GTPase that plays an essential role in the late steps of ribosome biogenesis. In Chlamydia pneumoniae (Chlamydophila pneumoniae), this protein is GTPase Der.